We begin with the raw amino-acid sequence, 437 residues long: ATP-dependent protease ATPase subunit HslU (437 aa).

Residues valine 18, 60–65, aspartate 250, glutamate 315, and arginine 387 each bind ATP; that span reads GCGKTE.

Belongs to the ClpX chaperone family. HslU subfamily. In terms of assembly, a double ring-shaped homohexamer of HslV is capped on each side by a ring-shaped HslU homohexamer. The assembly of the HslU/HslV complex is dependent on binding of ATP.

The protein resides in the cytoplasm. In terms of biological role, ATPase subunit of a proteasome-like degradation complex; this subunit has chaperone activity. The binding of ATP and its subsequent hydrolysis by HslU are essential for unfolding of protein substrates subsequently hydrolyzed by HslV. HslU recognizes the N-terminal part of its protein substrates and unfolds these before they are guided to HslV for hydrolysis. This Methylobacterium radiotolerans (strain ATCC 27329 / DSM 1819 / JCM 2831 / NBRC 15690 / NCIMB 10815 / 0-1) protein is ATP-dependent protease ATPase subunit HslU.